Here is a 98-residue protein sequence, read N- to C-terminus: NADH-ubiquinone oxidoreductase chain 4L (98 aa).

The next 3 membrane-spanning stretches (helical) occupy residues M1 to M21, S29 to L49, and I61 to I81.

Belongs to the complex I subunit 4L family. As to quaternary structure, core subunit of respiratory chain NADH dehydrogenase (Complex I) which is composed of 45 different subunits.

It is found in the mitochondrion inner membrane. The enzyme catalyses a ubiquinone + NADH + 5 H(+)(in) = a ubiquinol + NAD(+) + 4 H(+)(out). In terms of biological role, core subunit of the mitochondrial membrane respiratory chain NADH dehydrogenase (Complex I) which catalyzes electron transfer from NADH through the respiratory chain, using ubiquinone as an electron acceptor. Part of the enzyme membrane arm which is embedded in the lipid bilayer and involved in proton translocation. In Ceratotherium simum (White rhinoceros), this protein is NADH-ubiquinone oxidoreductase chain 4L (MT-ND4L).